The following is a 41-amino-acid chain: Cytochrome b559 subunit beta (41 aa).

The helical transmembrane segment at W16–S32 threads the bilayer. Heme is bound at residue H20.

This sequence belongs to the PsbE/PsbF family. Heterodimer of an alpha subunit and a beta subunit. PSII is composed of 1 copy each of membrane proteins PsbA, PsbB, PsbC, PsbD, PsbE, PsbF, PsbH, PsbI, PsbJ, PsbK, PsbL, PsbM, PsbT, PsbX, PsbY, PsbZ, Psb30/Ycf12, at least 3 peripheral proteins of the oxygen-evolving complex and a large number of cofactors. It forms dimeric complexes. Heme b is required as a cofactor.

It is found in the plastid. Its subcellular location is the chloroplast thylakoid membrane. Its function is as follows. This b-type cytochrome is tightly associated with the reaction center of photosystem II (PSII). PSII is a light-driven water:plastoquinone oxidoreductase that uses light energy to abstract electrons from H(2)O, generating O(2) and a proton gradient subsequently used for ATP formation. It consists of a core antenna complex that captures photons, and an electron transfer chain that converts photonic excitation into a charge separation. The polypeptide is Cytochrome b559 subunit beta (Nephroselmis olivacea (Green alga)).